A 1343-amino-acid polypeptide reads, in one-letter code: DNA-directed RNA polymerase subunit beta (1343 aa).

It belongs to the RNA polymerase beta chain family. As to quaternary structure, the RNAP catalytic core consists of 2 alpha, 1 beta, 1 beta' and 1 omega subunit. When a sigma factor is associated with the core the holoenzyme is formed, which can initiate transcription.

The catalysed reaction is RNA(n) + a ribonucleoside 5'-triphosphate = RNA(n+1) + diphosphate. Functionally, DNA-dependent RNA polymerase catalyzes the transcription of DNA into RNA using the four ribonucleoside triphosphates as substrates. The polypeptide is DNA-directed RNA polymerase subunit beta (Shewanella piezotolerans (strain WP3 / JCM 13877)).